A 98-amino-acid polypeptide reads, in one-letter code: Cystatin-B (98 aa).

Met-1 is subject to N-acetylmethionine. Positions 46-50 (QLVAG) match the Secondary area of contact motif.

Belongs to the cystatin family. As to quaternary structure, able to form dimers stabilized by noncovalent forces.

The protein resides in the cytoplasm. Functionally, this is an intracellular thiol proteinase inhibitor. This is Cystatin-B (CSTB) from Bos taurus (Bovine).